We begin with the raw amino-acid sequence, 711 residues long: Polyribonucleotide nucleotidyltransferase (711 aa).

Residues aspartate 487 and aspartate 493 each coordinate Mg(2+). A KH domain is found at 554–613 (PRIHTMKISAEKIKDVIGKGGAVIRALTEETGTTIEIEDDGTIKIAATEGAAAKEAIRRI). Positions 623–691 (GRIYTGKVAR…RQGRVRLSMK (69 aa)) constitute an S1 motif domain. Residues 691-711 (KEAVEKPAEEAAAEAPAAKEE) are disordered.

It belongs to the polyribonucleotide nucleotidyltransferase family. As to quaternary structure, component of the RNA degradosome, which is a multiprotein complex involved in RNA processing and mRNA degradation. Mg(2+) is required as a cofactor.

The protein resides in the cytoplasm. It carries out the reaction RNA(n+1) + phosphate = RNA(n) + a ribonucleoside 5'-diphosphate. Its function is as follows. Involved in mRNA degradation. Catalyzes the phosphorolysis of single-stranded polyribonucleotides processively in the 3'- to 5'-direction. The polypeptide is Polyribonucleotide nucleotidyltransferase (Vibrio parahaemolyticus serotype O3:K6 (strain RIMD 2210633)).